A 90-amino-acid chain; its full sequence is Delta-aiptatoxin-Adi1a (90 aa).

Positions 1 to 21 are cleaved as a signal peptide; that stretch reads MKTAMLIAVLGFCAALCFVES. Positions 22-44 are excised as a propeptide; it reads SHEEEREAAVYLTDLVSKAESAI. Intrachain disulfides connect C50–C86, C52–C77, and C70–C87.

The protein belongs to the sea anemone sodium channel inhibitory toxin family.

The protein localises to the secreted. Its subcellular location is the nematocyst. Cardioactive peptide that acts on voltage-gated sodium channels (hNav1.5/SCN5A) and voltage-gated potassium channels (Kv). The activity on sodium channels consists of inhibition on sodium current inactivation with no significant effect on current activation. This effect may be caused by direct interaction of the toxin with sodium channel site-3. The activity on potassium channels consists of a significant increase of the amplitude of the transient component of the potassium current, shifting the current threshold to more negative membrane potentials. These effects are concentration-dependent and reversible and may be due to a direct interaction between the toxin and the voltage-sensing domain of the channel. Physiologically, this toxin increases the amplitude of cardiomyocyte contraction and slows the late phase of the twitch relaxation velocity with no induction of spontaneous twitching. It increases action potential duration of cardiomyocytes with no effect on its threshold and on the cell resting potential. On insects, it shows neurotoxic activity to the blowfly larvae S.falculaty, causing an immediate spasm that progressed to body contraction and paralysis. In Exaiptasia diaphana (Tropical sea anemone), this protein is Delta-aiptatoxin-Adi1a.